Reading from the N-terminus, the 123-residue chain is UPF0738 protein BALH_1059 (123 aa).

The protein belongs to the UPF0738 family.

The chain is UPF0738 protein BALH_1059 from Bacillus thuringiensis (strain Al Hakam).